Here is a 193-residue protein sequence, read N- to C-terminus: Transforming protein RhoA (193 aa).

GTP contacts are provided by residues 12-19 (GDGACGKT) and 30-37 (FPEVYVPT). The Effector region motif lies at 34–42 (YVPTVFENY). At N41 the chain carries (Microbial infection) ADP-ribosylasparagine; by botulinum toxin. GTP-binding positions include 59–63 (DTAGQ) and 117–120 (NKKD). The tract at residues 61–78 (AGQEDYDRLRPLSYPDTD) is switch II region; involved in RAP1GDS1 isoform 2 binding. The residue at position 63 (Q63) is a 5-glutamyl serotonin. A Glycyl lysine isopeptide (Lys-Gly) (interchain with G-Cter in ubiquitin) cross-link involves residue K135. 160–162 (SAK) is a binding site for GTP. S188 bears the Phosphoserine; by PKG/PRKG1 mark. C190 is modified (cysteine methyl ester). Residue C190 is the site of S-geranylgeranyl cysteine attachment. Residues 191–193 (LVL) constitute a propeptide, removed in mature form.

It belongs to the small GTPase superfamily. Rho family. Interacts with ARHGEF28. Interacts (via GTP-bound form) with RIPOR1 (via N-terminus); this interaction links RHOA to STK24 and STK26 kinases. Interacts with RIPOR2 (via active GTP- or inactive GDP-bound forms) isoform 1 and isoform 2; these interactions are direct, block the loading of GTP to RHOA and decrease upon chemokine CCL19 stimulation in primary T lymphocytes. Binds PRKCL1, ROCK1 and ROCK2. Interacts with ARHGEF2, ARHGEF3, NET1 and RTKN. Interacts with PLCE1 and AKAP13. Interacts with DIAPH1. Interacts (in the constitutively activated, GTP-bound form) with DGKQ. Interacts with RACK1; enhances RHOA activation. Interacts with PKP4; the interaction is detected at the midbody. Interacts (GTP-bound form preferentially) with PKN2; the interaction stimulates autophosphorylation and phosphorylation of PKN2. Interacts with ARHGDIA; this interaction inactivates and stabilizes RHOA. Interacts with ARHGDIB. Interacts (GTP-bound form) with KCNA2 (via cytoplasmic N-terminal domain). Interacts (GTP-bound form) with ECT2; the interaction results in allosteric activation of ECT2. Interacts with RAP1GDS1; the interaction is direct and in a 1:1 stoichiometry. The cofactor is Mg(2+). In terms of processing, phosphorylation by PRKG1 at Ser-188 inactivates RHOA signaling. Phosphorylation by SLK at Ser-188 in response to AGTR2 activation. Ubiquitinated by the BCR(KCTD13) and BCR(TNFAIP1) E3 ubiquitin ligase complexes, leading to its degradation by the proteasome, thereby regulating the actin cytoskeleton and synaptic transmission in neurons. Ubiquitinated at Lys-135 in a FBXL19-mediated manner; leading to proteasomal degradation. Post-translationally, serotonylation of Gln-63 by TGM2 during activation and aggregation of platelets leads to constitutive activation of GTPase activity.

The protein localises to the cell membrane. It localises to the cytoplasm. Its subcellular location is the cytoskeleton. It is found in the cleavage furrow. The protein resides in the cell cortex. The protein localises to the midbody. It localises to the cell projection. Its subcellular location is the lamellipodium. It is found in the dendrite. The protein resides in the nucleus. It catalyses the reaction GTP + H2O = GDP + phosphate + H(+). Regulated by guanine nucleotide exchange factors (GEFs) which promote the exchange of bound GDP for free GTP, GTPase activating proteins (GAPs) which increase the GTP hydrolysis activity and GDP dissociation inhibitors which inhibit the dissociation of the nucleotide from the GTPase. Activated by GEFs such as ARHGEF2, ARHGEF3, ARHGEF28 and BCR. Inhibited by GAPs such as ARHGAP30. Inhibited by GDP dissociation inhibitors such as ARHGDIA. In terms of biological role, small GTPase which cycles between an active GTP-bound and an inactive GDP-bound state. Mainly associated with cytoskeleton organization, in active state binds to a variety of effector proteins to regulate cellular responses such as cytoskeletal dynamics, cell migration and cell cycle. Regulates a signal transduction pathway linking plasma membrane receptors to the assembly of focal adhesions and actin stress fibers. Involved in a microtubule-dependent signal that is required for the myosin contractile ring formation during cell cycle cytokinesis. Plays an essential role in cleavage furrow formation. Required for the apical junction formation of keratinocyte cell-cell adhesion. Essential for the SPATA13-mediated regulation of cell migration and adhesion assembly and disassembly. The MEMO1-RHOA-DIAPH1 signaling pathway plays an important role in ERBB2-dependent stabilization of microtubules at the cell cortex. It controls the localization of APC and CLASP2 to the cell membrane, via the regulation of GSK3B activity. In turn, membrane-bound APC allows the localization of the MACF1 to the cell membrane, which is required for microtubule capture and stabilization. Regulates KCNA2 potassium channel activity by reducing its location at the cell surface in response to CHRM1 activation; promotes KCNA2 endocytosis. Acts as an allosteric activator of guanine nucleotide exchange factor ECT2 by binding in its activated GTP-bound form to the PH domain of ECT2 which stimulates the release of PH inhibition and promotes the binding of substrate RHOA to the ECT2 catalytic center. May be an activator of PLCE1. In neurons, involved in the inhibition of the initial spine growth. Upon activation by CaMKII, modulates dendritic spine structural plasticity by relaying CaMKII transient activation to synapse-specific, long-term signaling. Acts as a regulator of platelet alpha-granule release during activation and aggregation of platelets. When activated by DAAM1 may signal centrosome maturation and chromosomal segregation during cell division. May also be involved in contractile ring formation during cytokinesis. The sequence is that of Transforming protein RhoA (RHOA) from Bos taurus (Bovine).